The chain runs to 277 residues: Caspase-6 (277 aa).

Residues 1-5 (MTETD) constitute a propeptide that is removed on maturation. The tri-arginine exosite stretch occupies residues 25 to 27 (KRR). Ser62 carries the phosphoserine modification. The active site involves His104. Positions 108 to 125 (NHIYAYDAKIEIQTLTGL) are 130's region. Cys146 is a catalytic residue. A propeptide spanning residues 163-176 (HQTDKLDDNVTQVD) is cleaved from the precursor. Ser240 is subject to Phosphoserine. 2 S-palmitoyl cysteine lipidation sites follow: Cys247 and Cys260.

Belongs to the peptidase C14A family. In terms of assembly, heterotetramer that consists of two anti-parallel arranged heterodimers, each one formed by a 18 kDa (p18) and a 11 kDa (p11) subunits. Interacts with BIRC6/bruce. Interacts with RIPK3. As to quaternary structure, heterotetramer that consists of two anti-parallel arranged heterodimers, each one formed by a 18 kDa (Caspase-6 subunit p18) and a 11 kDa (Caspase-6 subunit p11) subunit. In terms of processing, phosphorylated by NUAK1; phosphorylation inhibits self-activation. Phosphorylation at Ser-240 by AMP-activated protein kinase (PRKAA1 or PRKAA2) inhibits autocleavage, preventing caspase activation, thereby preventing hepatocyte apoptosis. Post-translationally, palmitoylation by ZDHHC17 blocks dimerization and subsequent activation, leading to inhibit the cysteine protease activity. Can be cleaved and activated by different caspases, depending on the context. Cleaved and activated by caspase-8 (CASP8) and subsequently by caspase-3 (CASP3). Can also undergo autoactivation by mediating autocleavage at Asp-162 and Asp-176, while it is not able to cleave its N-terminal disordered prodomain. Cleaved and activated by CASP1, possibly in the context of inflammation.

The protein resides in the cytoplasm. Its subcellular location is the nucleus. The catalysed reaction is Strict requirement for Asp at position P1 and has a preferred cleavage sequence of Val-Glu-His-Asp-|-.. Its activity is regulated as follows. During activation, the N-terminal disordered prodomain is removed by cleavage. Concomitantly, double cleavage gives rise to a large 18-kDa and a small 11-kDa subunit. The two large and two small subunits then assemble to form the active CASP6 complex. Can be cleaved and activated by different caspases, depending on the context. Cleaved and activated by caspase-8 (CASP8) and subsequently by caspase-3 (CASP3). Can also undergo autoactivation by mediating autocleavage at Asp-162 and Asp-176, while it is not able to cleave its N-terminal disordered prodomain. Intramolecular cleavage at Asp-176 is a prerequisite for CASP6 self-activation. Cleaved and activated by CASP1 in neurons, possibly in the context of inflammation. Phosphorylation at Ser-240 inhibits autocleavage, preventing caspase activation. In terms of biological role, cysteine protease that plays essential roles in programmed cell death, axonal degeneration, development and innate immunity. Acts as a non-canonical executioner caspase during apoptosis: localizes in the nucleus and cleaves the nuclear structural protein NUMA1 and lamin A/LMNA thereby inducing nuclear shrinkage and fragmentation. Lamin-A/LMNA cleavage is required for chromatin condensation and nuclear disassembly during apoptotic execution. Acts as a regulator of liver damage by promoting hepatocyte apoptosis: in absence of phosphorylation by AMP-activated protein kinase (AMPK), catalyzes cleavage of BID, leading to cytochrome c release, thereby participating in nonalcoholic steatohepatitis. Cleaves PARK7/DJ-1 in cells undergoing apoptosis. Involved in intrinsic apoptosis by mediating cleavage of RIPK1. Furthermore, cleaves many transcription factors such as NF-kappa-B and cAMP response element-binding protein/CREBBP. Cleaves phospholipid scramblase proteins XKR4 and XKR9. In addition to apoptosis, involved in different forms of programmed cell death. Plays an essential role in defense against viruses by acting as a central mediator of the ZBP1-mediated pyroptosis, apoptosis, and necroptosis (PANoptosis), independently of its cysteine protease activity. PANoptosis is a unique inflammatory programmed cell death, which provides a molecular scaffold that allows the interactions and activation of machinery required for inflammasome/pyroptosis, apoptosis and necroptosis. Mechanistically, interacts with RIPK3 and enhances the interaction between RIPK3 and ZBP1, leading to ZBP1-mediated inflammasome activation and cell death. Plays an essential role in axon degeneration during axon pruning which is the remodeling of axons during neurogenesis but not apoptosis. Regulates B-cell programs both during early development and after antigen stimulation. This chain is Caspase-6, found in Rattus norvegicus (Rat).